The sequence spans 208 residues: Adenylyl-sulfate kinase 3 (208 aa).

37–45 (GLSGSGKST) provides a ligand contact to ATP. Residues aspartate 67, arginine 70, arginine 84, asparagine 87, 110-111 (IS), and glycine 160 each bind substrate. The active-site Phosphoserine intermediate is serine 111.

The protein belongs to the APS kinase family. Expressed in root vasculature, root tips, leaf epidermal and guard cells, pollen grains and radicle of immature seeds.

The protein resides in the cytoplasm. It is found in the cytosol. The enzyme catalyses adenosine 5'-phosphosulfate + ATP = 3'-phosphoadenylyl sulfate + ADP + H(+). It participates in sulfur metabolism; hydrogen sulfide biosynthesis; sulfite from sulfate: step 2/3. Catalyzes the synthesis of activated sulfate for the sulfation of secondary metabolites, including the glucosinolates. Essential for plant reproduction and viability. This is Adenylyl-sulfate kinase 3 from Arabidopsis thaliana (Mouse-ear cress).